A 220-amino-acid chain; its full sequence is ATP synthase F(0) complex subunit a (220 aa).

6 helical membrane passes run 12–32 (PTLL…TLLP), 69–89 (WAMI…FTPT), 91–111 (QLSL…LLGL), 130–150 (LLIP…PFAL), 158–178 (LTAG…LLPM), and 183–203 (ALLT…VAMI).

The protein belongs to the ATPase A chain family. Component of the ATP synthase complex composed at least of ATP5F1A/subunit alpha, ATP5F1B/subunit beta, ATP5MC1/subunit c (homooctomer), MT-ATP6/subunit a, MT-ATP8/subunit 8, ATP5ME/subunit e, ATP5MF/subunit f, ATP5MG/subunit g, ATP5MK/subunit k, ATP5MJ/subunit j, ATP5F1C/subunit gamma, ATP5F1D/subunit delta, ATP5F1E/subunit epsilon, ATP5PF/subunit F6, ATP5PB/subunit b, ATP5PD/subunit d, ATP5PO/subunit OSCP. ATP synthase complex consists of a soluble F(1) head domain (subunits alpha(3) and beta(3)) - the catalytic core - and a membrane F(0) domain - the membrane proton channel (subunits c, a, 8, e, f, g, k and j). These two domains are linked by a central stalk (subunits gamma, delta, and epsilon) rotating inside the F1 region and a stationary peripheral stalk (subunits F6, b, d, and OSCP). Interacts with DNAJC30; interaction is direct.

Its subcellular location is the mitochondrion inner membrane. It carries out the reaction H(+)(in) = H(+)(out). In terms of biological role, subunit a, of the mitochondrial membrane ATP synthase complex (F(1)F(0) ATP synthase or Complex V) that produces ATP from ADP in the presence of a proton gradient across the membrane which is generated by electron transport complexes of the respiratory chain. ATP synthase complex consist of a soluble F(1) head domain - the catalytic core - and a membrane F(1) domain - the membrane proton channel. These two domains are linked by a central stalk rotating inside the F(1) region and a stationary peripheral stalk. During catalysis, ATP synthesis in the catalytic domain of F(1) is coupled via a rotary mechanism of the central stalk subunits to proton translocation. With the subunit c (ATP5MC1), forms the proton-conducting channel in the F(0) domain, that contains two crucial half-channels (inlet and outlet) that facilitate proton movement from the mitochondrial intermembrane space (IMS) into the matrix. Protons are taken up via the inlet half-channel and released through the outlet half-channel, following a Grotthuss mechanism. This is ATP synthase F(0) complex subunit a from Latimeria chalumnae (Coelacanth).